The sequence spans 530 residues: UDP-glucuronosyltransferase 1A8 (530 aa).

The first 25 residues, 1–25 (MARTGWTSPIPLCVSLLLTCGFAEA), serve as a signal peptide directing secretion. Residues N71, N292, and N344 are each glycosylated (N-linked (GlcNAc...) asparagine). A helical membrane pass occupies residues 488–504 (VIGFLLAVVLTVAFITF).

It belongs to the UDP-glycosyltransferase family. As to quaternary structure, homodimer. Homooligomer. Interacts with UGT1A1, UGT1A3, UGT1A4, UGT1A6, UGT1A7, UGT1A9 and UGT1A10 to form heterodimers. Isoform 1 interacts with isoform 2/i2 suggesting that oligomerization is involved in negative regulation of transferase activity by isoform 2. Isoform 1 also interacts with respective i2 isoforms of UGT1A1, UGT1A3, UGT1A4, UGT1A6, UGT1A7, UGT1A9 and UGT1A10. Expressed in kidney, colon and small intestine. Not expressed in liver. As to expression, expressed in liver, kidney, colon and small intestine.

It is found in the endoplasmic reticulum membrane. It carries out the reaction glucuronate acceptor + UDP-alpha-D-glucuronate = acceptor beta-D-glucuronoside + UDP + H(+). It catalyses the reaction 17beta-estradiol + UDP-alpha-D-glucuronate = 17beta-estradiol 3-O-(beta-D-glucuronate) + UDP + H(+). The catalysed reaction is 17alpha-estradiol + UDP-alpha-D-glucuronate = 17alpha-estradiol 3-O-(beta-D-glucuronate) + UDP + H(+). The enzyme catalyses estrone + UDP-alpha-D-glucuronate = estrone 3-O-(beta-D-glucuronate) + UDP + H(+). It carries out the reaction 16alpha,17alpha-estriol + UDP-alpha-D-glucuronate = 16alpha,17alpha-estriol 3-O-(beta-D-glucuronate) + UDP + H(+). It catalyses the reaction 2-hydroxy-17beta-estradiol + UDP-alpha-D-glucuronate = 2-hydroxy-17beta-estradiol 3-O-(beta-D-glucuronate) + UDP + H(+). The catalysed reaction is 2-hydroxy-17beta-estradiol + UDP-alpha-D-glucuronate = 17beta-estradiol 2-O-(beta-D-glucuronate) + UDP + H(+). The enzyme catalyses 2-hydroxyestrone + UDP-alpha-D-glucuronate = 2-hydroxyestrone 3-O-(beta-D-glucuronate) + UDP + H(+). It carries out the reaction 4-hydroxy-17beta-estradiol + UDP-alpha-D-glucuronate = 4-hydroxy-17beta-estradiol 3-O-(beta-D-glucuronate) + UDP + H(+). It catalyses the reaction 4-hydroxy-17beta-estradiol + UDP-alpha-D-glucuronate = 17beta-estradiol 4-O-(beta-D-glucuronate) + UDP + H(+). The catalysed reaction is 4-hydroxyestrone + UDP-alpha-D-glucuronate = 4-hydroxyestrone 3-O-(beta-D-glucuronate) + UDP + H(+). The enzyme catalyses 4-hydroxyestrone + UDP-alpha-D-glucuronate = estrone 4-O-(beta-D-glucuronate) + UDP + H(+). It carries out the reaction 2-methoxy-17beta-estradiol + UDP-alpha-D-glucuronate = 2-methoxy-17beta-estradiol 3-O-(beta-D-glucuronate) + UDP + H(+). It catalyses the reaction 2-methoxyestrone + UDP-alpha-D-glucuronate = 2-methoxyestrone 3-O-(beta-D-glucuronate) + UDP + H(+). The catalysed reaction is 4-methoxy-17beta-estradiol + UDP-alpha-D-glucuronate = 4-methoxy-17beta-estradiol 3-O-(beta-D-glucuronate) + UDP + H(+). The enzyme catalyses 4-methoxyestrone + UDP-alpha-D-glucuronate = 4-methoxyestrone 3-O-(beta-D-glucuronate) + UDP + H(+). It carries out the reaction 17beta-hydroxy-5alpha-androstan-3-one + UDP-alpha-D-glucuronate = 5alpha-dihydrotestosterone 17-O-(beta-D-glucuronate) + UDP + H(+). It catalyses the reaction 5alpha-dihydrotestosterone 17-O-(beta-D-glucuronate) + UDP-alpha-D-glucuronate = 5alpha-dihydrotestosterone 17-O-[beta-D-glucuronosyl-(1-&gt;2)-glucuronate] + UDP + H(+). The catalysed reaction is prunetin + UDP-alpha-D-glucuronate = prunetin-4'-O-beta-D-glucuronide + UDP. The enzyme catalyses prunetin + UDP-alpha-D-glucuronate = prunetin-5-O-beta-D-glucuronide + UDP. It carries out the reaction candesartan + UDP-alpha-D-glucuronate = candesartan O-beta-D-glucuronoside + UDP. It catalyses the reaction mycophenolate + UDP-alpha-D-glucuronate = mycophenolate 7-O-beta-D-glucuronide + UDP + H(+). The catalysed reaction is (E)-ferulate + UDP-alpha-D-glucuronate = (E)-4-O-(beta-D-glucuronosyl)-ferulate + UDP + H(+). The enzyme catalyses (E)-ferulate + UDP-alpha-D-glucuronate = (E)-ferulic acid beta-D-glucuronate ester + UDP. UDP-glucuronosyltransferase (UGT) that catalyzes phase II biotransformation reactions in which lipophilic substrates are conjugated with glucuronic acid to increase the metabolite's water solubility, thereby facilitating excretion into either the urine or bile. Essential for the elimination and detoxification of drugs, xenobiotics and endogenous compounds. Catalyzes the glucuronidation of endogenous steroid hormones such as androgens and estrogens. Produces dihydrotestosterone (DHT) diglucuronide from the DHT after two subsequent glucoronidation steps. Involved in the glucuronidation of the phytochemical ferulic acid at the phenolic or the carboxylic acid group. Also catalyzes the glucuronidation of the isoflavones genistein, daidzein, glycitein, formononetin, biochanin A and prunetin, which are phytoestrogens with anticancer and cardiovascular properties. Involved in the glucuronidation of the AGTR1 angiotensin receptor antagonist caderastan, a drug which can inhibit the effect of angiotensin II. Also metabolizes mycophenolate, an immunosuppressive agent. In terms of biological role, lacks UGT glucuronidation activity but acts as a negative regulator of isoform 1. This Homo sapiens (Human) protein is UDP-glucuronosyltransferase 1A8.